The following is a 194-amino-acid chain: Ion-translocating oxidoreductase complex subunit A (194 aa).

6 helical membrane passes run 5–25, 47–67, 72–92, 102–122, 135–155, and 172–192; these read VLIL…FLGL, FVLT…LVPF, LRTI…EMFV, VLGV…VALL, LTYG…FAAM, and SIGL…SGLI.

This sequence belongs to the NqrDE/RnfAE family. In terms of assembly, the complex is composed of six subunits: RnfA, RnfB, RnfC, RnfD, RnfE and RnfG.

The protein localises to the cell inner membrane. Functionally, part of a membrane-bound complex that couples electron transfer with translocation of ions across the membrane. The chain is Ion-translocating oxidoreductase complex subunit A from Alcanivorax borkumensis (strain ATCC 700651 / DSM 11573 / NCIMB 13689 / SK2).